We begin with the raw amino-acid sequence, 1493 residues long: Mitogen-activated protein kinase kinase kinase 1 (1493 aa).

The segment covering 1-23 (MAAAAGDRASSSGFPGAAAASPE) has biased composition (low complexity). Disordered stretches follow at residues 1 to 178 (MAAA…PEER) and 194 to 300 (HEWL…EETS). Ala-2 carries the post-translational modification N-acetylalanine. A Phosphoserine modification is found at Ser-21. Residues 24–35 (AGGGGGGGGALQ) show a composition bias toward gly residues. The segment covering 36 to 46 (GSGAPAAGAAG) has biased composition (low complexity). Over residues 89–99 (PPCPSTSPSPE) the composition is skewed to pro residues. Positions 140–156 (ARSPAGAEPPSAAAPSG) are enriched in low complexity. Residue Ser-142 is modified to Phosphoserine. Residues 157–178 (REMENKETLKGLHKMEDRPEER) are compositionally biased toward basic and acidic residues. Positions 235 to 256 (SAAPAPKGRRSPSPGSSPSGRS) are enriched in low complexity. Residue Ser-270 is modified to Phosphoserine. Thr-280 bears the Phosphothreonine mark. Phosphoserine is present on residues Ser-287, Ser-292, and Ser-295. The segment at 333 to 361 (YRVFIGPQNCSCGRGAFCIHLLFVMLRVF) adopts an SWIM-type zinc-finger fold. Residues 411-428 (SNSHTLSSSSTSTSSSEN) are compositionally biased toward low complexity. The segment at 411 to 431 (SNSHTLSSSSTSTSSSENSIK) is disordered. The segment at 438–487 (CPICLLGMLDEESLTVCEDGCRNKLHHHCMSIWAEECRRNREPLICPLCR) adopts an RING-type zinc-finger fold. Phosphoserine is present on residues Ser-502 and Ser-526. Disordered regions lie at residues 506–531 (SPAS…RRNQ) and 895–914 (EHTV…RLSA). Over residues 512-527 (AVQQPSSPQQPVAGSQ) the composition is skewed to low complexity. Ser-915 is modified (phosphoserine). 2 disordered regions span residues 927 to 957 (SVGL…LNSS) and 992 to 1066 (PCKI…TLDL). Positions 998–1013 (ASPQTQRKFSLQFQRN) are enriched in polar residues. Phosphoserine occurs at positions 999 and 1024. Over residues 1049–1063 (GSTSKLGDATKSSMT) the composition is skewed to polar residues. The Protein kinase domain maps to 1224–1489 (WLKGQQIGLG…SRELLKHPVF (266 aa)). ATP contacts are provided by residues 1230–1238 (IGLGAFSSC) and Lys-1253. The active-site Proton acceptor is the Asp-1350. Phosphothreonine; by autocatalysis is present on residues Thr-1381 and Thr-1393.

This sequence belongs to the protein kinase superfamily. STE Ser/Thr protein kinase family. MAP kinase kinase kinase subfamily. As to quaternary structure, binds both upstream activators and downstream substrates in multimolecular complexes through its N-terminus. Oligomerizes after binding MAP4K2 or TRAF2. Interacts with AXIN1. Interacts (via the kinase catalytic domain) with STK38. Interacts with GRIPAP1. The cofactor is Mg(2+). In terms of processing, autophosphorylated. As to expression, highly expressed in the heart and spleen while a lower level expression is seen in the liver.

It catalyses the reaction L-seryl-[protein] + ATP = O-phospho-L-seryl-[protein] + ADP + H(+). The catalysed reaction is L-threonyl-[protein] + ATP = O-phospho-L-threonyl-[protein] + ADP + H(+). With respect to regulation, activated by autophosphorylation on Thr-1381 and Thr-1393 following oligomerization. Component of a protein kinase signal transduction cascade. Activates the ERK and JNK kinase pathways by phosphorylation of MAP2K1 and MAP2K4. May phosphorylate the MAPK8/JNK1 kinase. Activates CHUK and IKBKB, the central protein kinases of the NF-kappa-B pathway. In Mus musculus (Mouse), this protein is Mitogen-activated protein kinase kinase kinase 1 (Map3k1).